The following is a 284-amino-acid chain: Actin-like protein ARP10 (284 aa).

This sequence belongs to the actin family. ARP10 subfamily. As to quaternary structure, self-associates. Component of the dynactin complex composed of at least ARP1, JNM1, NIP100 and ARP10. Dynactin comprises a short rod of the ARP1 filament attached to ARP10 at its pointed-end and probably associated with the capping protein at its barbed-end. The rod is implicated in dynein cargo binding. A sidearm formed by NIP100 projects from the ARP1 filament and is implicated in motor binding. Interacts with ARP1 and JNM1.

Its subcellular location is the cytoplasm. The protein resides in the cytoskeleton. Pointed-end-associated component of the dynactin complex which assists cytoplasmic dynein by increasing its processivity and by regulation of its cargo binding. The dynactin complex is required for the spindle translocation late in anaphase and is involved in a cell wall synthesis checkpoint. May regulate the association of the dynactin complex with the plasma membrane. The polypeptide is Actin-like protein ARP10 (ARP10) (Saccharomyces cerevisiae (strain ATCC 204508 / S288c) (Baker's yeast)).